We begin with the raw amino-acid sequence, 257 residues long: Snake venom serine protease rhinocerase 4 (257 aa).

Positions 1–17 (VLIRVLANLLVLQLSYA) are cleaved as a signal peptide. A propeptide spanning residues 18–23 (QKSSEL) is cleaved from the precursor. The region spanning 24–248 (VIGGAECNIN…YTDWIRSIIG (225 aa)) is the Peptidase S1 domain. Cystine bridges form between cysteine 30/cysteine 162, cysteine 49/cysteine 65, cysteine 97/cysteine 255, cysteine 141/cysteine 209, cysteine 173/cysteine 188, and cysteine 199/cysteine 224. An N-linked (GlcNAc...) asparagine glycan is attached at asparagine 43. Histidine 64 serves as the catalytic Charge relay system. N-linked (GlcNAc...) asparagine glycosylation is found at asparagine 78 and asparagine 100. Aspartate 109 serves as the catalytic Charge relay system. Serine 203 functions as the Charge relay system in the catalytic mechanism. A glycan (N-linked (GlcNAc...) asparagine) is linked at asparagine 250.

This sequence belongs to the peptidase S1 family. Snake venom subfamily. As to expression, expressed by the venom gland.

The protein resides in the secreted. In terms of biological role, snake venom serine protease that may act in the hemostasis system of the prey. The sequence is that of Snake venom serine protease rhinocerase 4 from Bitis rhinoceros (West African gaboon viper).